We begin with the raw amino-acid sequence, 74 residues long: Small ribosomal subunit protein uS8c (74 aa).

The protein belongs to the universal ribosomal protein uS8 family. Part of the 30S ribosomal subunit.

The protein localises to the plastid. Its subcellular location is the chloroplast. One of the primary rRNA binding proteins, it binds directly to 16S rRNA central domain where it helps coordinate assembly of the platform of the 30S subunit. In Oenothera ammophila (Evening primerose), this protein is Small ribosomal subunit protein uS8c (rps8).